Here is a 314-residue protein sequence, read N- to C-terminus: GMP synthase [glutamine-hydrolyzing] subunit B (314 aa).

The GMPS ATP-PPase domain occupies 2 to 186 (FDPKKFVEEA…LGIPDEIVER (185 aa)). 29 to 35 (SGGVDST) contributes to the ATP binding site.

As to quaternary structure, heterodimer composed of a glutamine amidotransferase subunit (A) and a GMP-binding subunit (B).

It carries out the reaction XMP + L-glutamine + ATP + H2O = GMP + L-glutamate + AMP + diphosphate + 2 H(+). It functions in the pathway purine metabolism; GMP biosynthesis; GMP from XMP (L-Gln route): step 1/1. In terms of biological role, catalyzes the synthesis of GMP from XMP. This is GMP synthase [glutamine-hydrolyzing] subunit B (guaAB) from Methanopyrus kandleri (strain AV19 / DSM 6324 / JCM 9639 / NBRC 100938).